We begin with the raw amino-acid sequence, 311 residues long: Malate dehydrogenase (311 aa).

NAD(+) contacts are provided by residues 7–13 (GAAGGIG) and Asp34. Positions 81 and 87 each coordinate substrate. NAD(+) contacts are provided by residues Asn94 and 117–119 (ITN). Substrate contacts are provided by Asn119 and Arg153. His177 acts as the Proton acceptor in catalysis. Position 227 (Met227) interacts with NAD(+).

It belongs to the LDH/MDH superfamily. MDH type 1 family. In terms of assembly, homodimer.

It catalyses the reaction (S)-malate + NAD(+) = oxaloacetate + NADH + H(+). In terms of biological role, catalyzes the reversible oxidation of malate to oxaloacetate. This chain is Malate dehydrogenase, found in Histophilus somni (strain 129Pt) (Haemophilus somnus).